A 1358-amino-acid chain; its full sequence is Tenascin-R (1358 aa).

The first 31 residues, 1-31, serve as a signal peptide directing secretion; the sequence is MGADGETVVLKNMLIGINLILLGSMIKPSEC. 2 O-linked (GalNAc...) threonine glycosylation sites follow: Thr-36 and Thr-37. Asn-55 is a glycosylation site (N-linked (GlcNAc...) asparagine). Residues 127 to 157 adopt a coiled-coil conformation; sequence CASSAQVLQELLSRIEMLEREVSVLRDQCNA. Ser-176 carries O-linked (Xyl...) (chondroitin sulfate) serine glycosylation. Residues Asn-180 and Asn-198 are each glycosylated (N-linked (GlcNAc...) asparagine). EGF-like domains follow at residues 188-199, 219-230, and 250-261; these read CICNEGWFGKNC, CICDSEYSGDDC, and CVCEEPYTGEDC. The O-linked (Xyl...) (chondroitin sulfate) serine glycan is linked to Ser-271. Asn-278 carries an N-linked (GlcNAc...) asparagine glycan. Residues 281–292 enclose the EGF-like 4 domain; the sequence is CLCEEGYVGEDC. Intrachain disulfides connect Cys-292/Cys-301, Cys-297/Cys-312, and Cys-314/Cys-323. O-linked (Xyl...) (chondroitin sulfate) serine glycosylation is present at Ser-302. The EGF-like 5 domain maps to 312 to 323; it reads CVCEEGYQGPDC. Fibronectin type-III domains are found at residues 328–420, 421–505, 506–595, 596–687, 688–777, 778–865, 866–955, 956–1042, and 1043–1130; these read PPED…TPQG, LQFK…TVID, GPTQ…TEID, APKN…TELD, SPRD…FRPI, SHLH…TGID, PPKD…AMDN, PVDL…TLLD, and PPAN…TGGR. Residues Asn-392, Asn-470, and Asn-581 are each glycosylated (N-linked (GlcNAc...) asparagine). Ser-724 bears the Phosphoserine mark. 5 N-linked (GlcNAc...) asparagine glycosylation sites follow: Asn-791, Asn-874, Asn-1036, Asn-1046, and Asn-1261. A Fibrinogen C-terminal domain is found at 1129-1344; it reads GRVFPHPQDC…FVEMKMRPYN (216 aa).

The protein belongs to the tenascin family. In terms of assembly, forms oligomers. Interacts with CNTN1, TNC, and FN1. Interacts with BCAN and ACAN in a calcium-dependent manner. Interacts with SCN2B, PTPRZ1, and CSPG3. Post-translationally, contains N-linked oligosaccharides, O-linked sialylated structures and O-linked chondroitin sulfate glycosaminoglycans. Contains N-linked oligosaccharides with a sulfated carbohydrate structure. O-glycosylated on Thr-36 or Thr-37 with a core 1 or possibly core 8 glycan. As to expression, brain specific.

Its subcellular location is the secreted. The protein resides in the extracellular space. It is found in the extracellular matrix. Functionally, neural extracellular matrix (ECM) protein involved in interactions with different cells and matrix components. These interactions can influence cellular behavior by either evoking a stable adhesion and differentiation, or repulsion and inhibition of neurite growth. Binding to cell surface gangliosides inhibits RGD-dependent integrin-mediated cell adhesion and results in an inhibition of PTK2/FAK1 (FAK) phosphorylation and cell detachment. Binding to membrane surface sulfatides results in a oligodendrocyte adhesion and differentiation. Interaction with CNTN1 induces a repulsion of neurons and an inhibition of neurite outgrowth. Interacts with SCN2B may play a crucial role in clustering and regulation of activity of sodium channels at nodes of Ranvier. TNR-linked chondroitin sulfate glycosaminoglycans are involved in the interaction with FN1 and mediate inhibition of cell adhesion and neurite outgrowth. The highly regulated addition of sulfated carbohydrate structure may modulate the adhesive properties of TNR over the course of development and during synapse maintenance. This is Tenascin-R (TNR) from Homo sapiens (Human).